Here is an 80-residue protein sequence, read N- to C-terminus: Large ribosomal subunit protein uL24 (80 aa).

The tract at residues 53 to 80 (HMRPTQGQTQGSIIEREFPIHSSNVKKS) is disordered.

The protein belongs to the universal ribosomal protein uL24 family. In terms of assembly, part of the 50S ribosomal subunit.

Its function is as follows. One of two assembly initiator proteins, it binds directly to the 5'-end of the 23S rRNA, where it nucleates assembly of the 50S subunit. One of the proteins that surrounds the polypeptide exit tunnel on the outside of the subunit. The sequence is that of Large ribosomal subunit protein uL24 from Pelodictyon phaeoclathratiforme (strain DSM 5477 / BU-1).